We begin with the raw amino-acid sequence, 539 residues long: Acid-sensing ion channel 4 (539 aa).

Topologically, residues 1–68 (MPIEIVCKIK…GPGPHGLRRT (68 aa)) are cytoplasmic. The chain crosses the membrane as a helical span at residues 69–89 (LWVLALLTSLAAFLYQAASLA). Topologically, residues 90–438 (RGYLTRPHLV…EQRAAYGLSA (349 aa)) are extracellular. Intrachain disulfides connect cysteine 118–cysteine 202 and cysteine 180–cysteine 187. N-linked (GlcNAc...) asparagine glycans are attached at residues asparagine 191, asparagine 243, asparagine 341, and asparagine 376. Disulfide bonds link cysteine 296–cysteine 375, cysteine 318–cysteine 371, cysteine 322–cysteine 369, cysteine 331–cysteine 353, and cysteine 333–cysteine 345. The helical transmembrane segment at 439–459 (LLGDLGGQMGLFIGASILTLL) threads the bilayer. A GAS motif; ion selectivity filter motif is present at residues 452–454 (GAS). The Cytoplasmic segment spans residues 460-539 (EILDYIYEVS…PGSLFEDFAC (80 aa)). The disordered stretch occupies residues 501-531 (EQSPCPNRGRAEGGGASNLLPNHHHPHGPPG).

This sequence belongs to the amiloride-sensitive sodium channel (TC 1.A.6) family. ASIC4 subfamily. In terms of assembly, homotrimer. Heterotrimer; with other ASIC proteins producing functional channels. As to expression, expressed in brain, spinal cord and dorsal root ganglion (DRG). Expressed by a subset of sensory neurons in the DRG. Expressed by granule cells in the cerebellar cortex. In hippocampus, expression is detected in dentate gyrus granule cells, in pyramidal cells of CA1-CA3 subfields and in interneurons of the striatum oriens and radiatum of all subfields. In cerebral cortex expressed in small, medium and large pyramidal cells in layers 2, 3 and 5 respectively. Also expressed in striatum, globus pallidus, inferior and superior calliculi, amygdala, magnocellular preoptic nucleus, islands of Calleja and large neurons of olfactory tubercules.

The protein localises to the cell membrane. Its function is as follows. Does not exhibit measurable stand-alone pH-gated sodium channel activity but may form pH-gated heterotrimeric sodium channels. Its activity could also depend on alternative gating mechanisms. This chain is Acid-sensing ion channel 4, found in Rattus norvegicus (Rat).